The following is a 163-amino-acid chain: MIKKKNKKSYTSVYALGQYISMSTHKARRVIDQIRGRSYEEALMILELMPYRGCYPIFKLVYSAAANASHNKGFKETNLVISKAEVNQGNTVKKLKPRARGRSYPIKRSTCHITIVLEDISFYEQYKEYDEYFMYLKKPGSSNENKNLTCYDTYSSGGLWDKK.

It belongs to the universal ribosomal protein uL22 family. In terms of assembly, part of the 50S ribosomal subunit.

The protein resides in the plastid. The protein localises to the chloroplast. In terms of biological role, this protein binds specifically to 23S rRNA. Functionally, the globular domain of the protein is located near the polypeptide exit tunnel on the outside of the subunit, while an extended beta-hairpin is found that lines the wall of the exit tunnel in the center of the 70S ribosome. The polypeptide is Large ribosomal subunit protein uL22c (rpl22) (Lobularia maritima (Sweet alyssum)).